The sequence spans 255 residues: Tryptophan synthase alpha chain (255 aa).

Residues E49 and D60 each act as proton acceptor in the active site.

This sequence belongs to the TrpA family. As to quaternary structure, tetramer of two alpha and two beta chains.

The enzyme catalyses (1S,2R)-1-C-(indol-3-yl)glycerol 3-phosphate + L-serine = D-glyceraldehyde 3-phosphate + L-tryptophan + H2O. It functions in the pathway amino-acid biosynthesis; L-tryptophan biosynthesis; L-tryptophan from chorismate: step 5/5. Functionally, the alpha subunit is responsible for the aldol cleavage of indoleglycerol phosphate to indole and glyceraldehyde 3-phosphate. This chain is Tryptophan synthase alpha chain, found in Desulfovibrio desulfuricans (strain ATCC 27774 / DSM 6949 / MB).